Consider the following 533-residue polypeptide: Retinoid isomerohydrolase (533 aa).

At Ser-2 the chain carries N-acetylserine. Thr-101 and Thr-105 each carry phosphothreonine. The S-palmitoyl cysteine; in membrane form moiety is linked to residue Cys-112. Position 113 is an N6-acetyllysine (Lys-113). The residue at position 117 (Ser-117) is a Phosphoserine. His-180 serves as a coordination point for Fe cation. A lipid anchor (S-palmitoyl cysteine; in membrane form) is attached at Cys-231. His-241 and His-313 together coordinate Fe cation. 2 S-palmitoyl cysteine; in membrane form lipidation sites follow: Cys-329 and Cys-330. Position 527 (His-527) interacts with Fe cation.

Belongs to the carotenoid oxygenase family. In terms of assembly, interacts with MYO7A; this mediates light-dependent intracellular transport of RPE65. Fe(2+) is required as a cofactor. Post-translationally, palmitoylation by LRAT regulates ligand binding specificity; the palmitoylated form (membrane form) specifically binds all-trans-retinyl-palmitate, while the soluble unpalmitoylated form binds all-trans-retinol (vitamin A). Retinal pigment epithelium specific.

The protein localises to the cytoplasm. It localises to the cell membrane. It is found in the microsome membrane. It catalyses the reaction an all-trans-retinyl ester + H2O = 11-cis-retinol + a fatty acid + H(+). It carries out the reaction lutein = (3R,3'S)-zeaxanthin. The enzyme catalyses all-trans-retinyl hexadecanoate + H2O = 11-cis-retinol + hexadecanoate + H(+). In terms of biological role, critical isomerohydrolase in the retinoid cycle involved in regeneration of 11-cis-retinal, the chromophore of rod and cone opsins. Catalyzes the cleavage and isomerization of all-trans-retinyl fatty acid esters to 11-cis-retinol which is further oxidized by 11-cis retinol dehydrogenase to 11-cis-retinal for use as visual chromophore. Essential for the production of 11-cis retinal for both rod and cone photoreceptors. Also capable of catalyzing the isomerization of lutein to meso-zeaxanthin an eye-specific carotenoid. The soluble form binds vitamin A (all-trans-retinol), making it available for LRAT processing to all-trans-retinyl ester. The membrane form, palmitoylated by LRAT, binds all-trans-retinyl esters, making them available for IMH (isomerohydrolase) processing to all-cis-retinol. The soluble form is regenerated by transferring its palmitoyl groups onto 11-cis-retinol, a reaction catalyzed by LRAT. The protein is Retinoid isomerohydrolase (RPE65) of Canis lupus familiaris (Dog).